The primary structure comprises 87 residues: Defensin-like protein 81 (87 aa).

The first 27 residues, 1–27 (MTIKKFLPLLLSSLMVYSLILLPIISG), serve as a signal peptide directing secretion. 4 disulfides stabilise this stretch: C33–C69, C37–C57, C43–C67, and C47–C68.

Belongs to the DEFL family.

It is found in the secreted. This is Defensin-like protein 81 from Arabidopsis thaliana (Mouse-ear cress).